The sequence spans 339 residues: Lipoate--protein ligase (339 aa).

One can recognise a BPL/LPL catalytic domain in the interval 31–221 (FLDDDILFPY…QLLQIETISQ (191 aa)). ATP-binding positions include R73, 78–81 (GAVY), K135, and A139. Residue K135 participates in (R)-lipoate binding.

The protein belongs to the LplA family.

The catalysed reaction is L-lysyl-[lipoyl-carrier protein] + (R)-lipoate + ATP = N(6)-[(R)-lipoyl]-L-lysyl-[lipoyl-carrier protein] + AMP + diphosphate + H(+). It functions in the pathway protein modification; protein lipoylation via exogenous pathway; protein N(6)-(lipoyl)lysine from lipoate: step 1/2. Its pathway is protein modification; protein lipoylation via exogenous pathway; protein N(6)-(lipoyl)lysine from lipoate: step 2/2. Its function is as follows. Catalyzes specifically the lipoylation of GcvH-L (SpyM50867), likely via the ATP-dependent activation of lipoate to lipoyl-AMP and the transfer of the activated lipoyl onto the lipoyl domain of the target protein. In Streptococcus pyogenes serotype M5 (strain Manfredo), this protein is Lipoate--protein ligase.